The chain runs to 419 residues: Squamosa promoter-binding-like protein 2 (419 aa).

The disordered stretch occupies residues 77-96; the sequence is SAEVRTHNFTSETGESLPGE. The segment at 166–243 adopts an SBP-type zinc-finger fold; sequence TPHCQVEGCN…SDHNARRRKP (78 aa). Residues Cys-169, Cys-174, Cys-191, His-194, Cys-210, Cys-213, His-217, and Cys-229 each coordinate Zn(2+). The Bipartite nuclear localization signal signature appears at 226–242; the sequence is KRSCRRRLSDHNARRRK. The segment at 230-249 is disordered; the sequence is RRRLSDHNARRRKPNPGRTY.

The cofactor is Zn(2+).

The protein localises to the nucleus. Functionally, trans-acting factor that binds specifically to the consensus nucleotide sequence 5'-TNCGTACAA-3'. This chain is Squamosa promoter-binding-like protein 2 (SPL2), found in Arabidopsis thaliana (Mouse-ear cress).